The following is a 304-amino-acid chain: Acetyl-coenzyme A carboxylase carboxyl transferase subunit beta (304 aa).

Residues 23-292 (VWTKCDSCGQ…PNPEAPREGV (270 aa)) enclose the CoA carboxyltransferase N-terminal domain. The Zn(2+) site is built by Cys27, Cys30, Cys46, and Cys49. Residues 27-49 (CDSCGQVLYRAELERNLEVCPKC) form a C4-type zinc finger. Residues 284 to 304 (NPEAPREGVVVPPVPDQEPEA) form a disordered region. Residues 295 to 304 (PPVPDQEPEA) show a composition bias toward pro residues.

It belongs to the AccD/PCCB family. As to quaternary structure, acetyl-CoA carboxylase is a heterohexamer composed of biotin carboxyl carrier protein (AccB), biotin carboxylase (AccC) and two subunits each of ACCase subunit alpha (AccA) and ACCase subunit beta (AccD). Zn(2+) is required as a cofactor.

It localises to the cytoplasm. It catalyses the reaction N(6)-carboxybiotinyl-L-lysyl-[protein] + acetyl-CoA = N(6)-biotinyl-L-lysyl-[protein] + malonyl-CoA. Its pathway is lipid metabolism; malonyl-CoA biosynthesis; malonyl-CoA from acetyl-CoA: step 1/1. Its function is as follows. Component of the acetyl coenzyme A carboxylase (ACC) complex. Biotin carboxylase (BC) catalyzes the carboxylation of biotin on its carrier protein (BCCP) and then the CO(2) group is transferred by the transcarboxylase to acetyl-CoA to form malonyl-CoA. In Shigella flexneri serotype 5b (strain 8401), this protein is Acetyl-coenzyme A carboxylase carboxyl transferase subunit beta.